The chain runs to 558 residues: CTP synthase (558 aa).

An amidoligase domain region spans residues 1-267 (MAKFVFVTGG…CLEMLDVLNL (267 aa)). Ser-13 serves as a coordination point for CTP. Ser-13 contacts UTP. Residues 14 to 19 (SIGKGI) and Asp-71 each bind ATP. Positions 71 and 141 each coordinate Mg(2+). CTP is bound by residues 148–150 (DIE), 188–193 (KTKPTQ), and Lys-224. Residues 188 to 193 (KTKPTQ) and Lys-224 contribute to the UTP site. Positions 292 to 534 (KVALVGKYVQ…IEAAQLRLPA (243 aa)) constitute a Glutamine amidotransferase type-1 domain. Gly-354 lines the L-glutamine pocket. Cys-381 acts as the Nucleophile; for glutamine hydrolysis in catalysis. Residues 382-385 (LGMQ), Glu-405, and Arg-462 each bind L-glutamine. Residues His-507 and Glu-509 contribute to the active site. The disordered stretch occupies residues 536 to 558 (PDEALRRQSQTNISAQEKPSRIG). The segment covering 542 to 552 (RQSQTNISAQE) has biased composition (polar residues).

It belongs to the CTP synthase family. As to quaternary structure, homotetramer.

The enzyme catalyses UTP + L-glutamine + ATP + H2O = CTP + L-glutamate + ADP + phosphate + 2 H(+). It catalyses the reaction L-glutamine + H2O = L-glutamate + NH4(+). It carries out the reaction UTP + NH4(+) + ATP = CTP + ADP + phosphate + 2 H(+). It functions in the pathway pyrimidine metabolism; CTP biosynthesis via de novo pathway; CTP from UDP: step 2/2. Allosterically activated by GTP, when glutamine is the substrate; GTP has no effect on the reaction when ammonia is the substrate. The allosteric effector GTP functions by stabilizing the protein conformation that binds the tetrahedral intermediate(s) formed during glutamine hydrolysis. Inhibited by the product CTP, via allosteric rather than competitive inhibition. Its function is as follows. Catalyzes the ATP-dependent amination of UTP to CTP with either L-glutamine or ammonia as the source of nitrogen. Regulates intracellular CTP levels through interactions with the four ribonucleotide triphosphates. The polypeptide is CTP synthase (Prochlorococcus marinus (strain MIT 9303)).